Here is a 140-residue protein sequence, read N- to C-terminus: Organic hydroperoxide resistance protein-like (140 aa).

The protein belongs to the OsmC/Ohr family.

The protein is Organic hydroperoxide resistance protein-like of Mycoplasma genitalium (strain ATCC 33530 / DSM 19775 / NCTC 10195 / G37) (Mycoplasmoides genitalium).